Consider the following 214-residue polypeptide: Osteoclast-stimulating factor 1 (214 aa).

Position 2 is an N-acetylserine (Ser-2). The 60-residue stretch at 12–71 (GQVKVFRALYTFEPRTPDELYFEEGDIIYITDMSDTNWWKGTCKGRTGLIPSNYVAEQAE) folds into the SH3 domain. 3 ANK repeats span residues 72–101 (SIDNPLHEAAKRGNLSWLRECLDNRVGVNG), 105–135 (AGSTALYWACHGGHRDIVEMLFTQPNIELNQ), and 139–168 (LGDTALHAAAWKGYADIVQLLLEKGARTDL). 2 positions are modified to phosphoserine: Ser-202 and Ser-213.

As to quaternary structure, interacts with SRC and SMN1. Interacts with FASLG.

The protein localises to the cytoplasm. Induces bone resorption, acting probably through a signaling cascade which results in the secretion of factor(s) enhancing osteoclast formation and activity. The protein is Osteoclast-stimulating factor 1 (OSTF1) of Bos taurus (Bovine).